Consider the following 207-residue polypeptide: Probable nicotinate-nucleotide adenylyltransferase (207 aa).

The protein belongs to the NadD family.

It catalyses the reaction nicotinate beta-D-ribonucleotide + ATP + H(+) = deamido-NAD(+) + diphosphate. The protein operates within cofactor biosynthesis; NAD(+) biosynthesis; deamido-NAD(+) from nicotinate D-ribonucleotide: step 1/1. Functionally, catalyzes the reversible adenylation of nicotinate mononucleotide (NaMN) to nicotinic acid adenine dinucleotide (NaAD). This is Probable nicotinate-nucleotide adenylyltransferase from Synechococcus sp. (strain JA-3-3Ab) (Cyanobacteria bacterium Yellowstone A-Prime).